Consider the following 318-residue polypeptide: Ubiquitin-like domain-containing CTD phosphatase 1 (318 aa).

Residues 3-81 form the Ubiquitin-like domain; that stretch reads LSLIIKWGGQ…IMMMGTREES (79 aa). The FCP1 homology domain maps to 133-294; it reads PREGKKLLVL…VKLSQYLKEI (162 aa). Residues aspartate 143, aspartate 145, and aspartate 253 each coordinate Mg(2+).

Mg(2+) serves as cofactor.

The protein localises to the nucleus. The catalysed reaction is O-phospho-L-seryl-[protein] + H2O = L-seryl-[protein] + phosphate. The enzyme catalyses O-phospho-L-threonyl-[protein] + H2O = L-threonyl-[protein] + phosphate. Its function is as follows. Dephosphorylates 26S nuclear proteasomes, thereby decreasing their proteolytic activity. Recruited to the 19S regulatory particle of the 26S proteasome where it dephosphorylates 19S component psmc2 which impairs psmc2 ATPase activity and disrupts 26S proteasome assembly. Has also been reported to stimulate the proteolytic activity of the 26S proteasome. This chain is Ubiquitin-like domain-containing CTD phosphatase 1 (ublcp1), found in Xenopus laevis (African clawed frog).